Consider the following 251-residue polypeptide: ATP synthase subunit a (251 aa).

Helical transmembrane passes span 14–34 (GFVK…LLAV), 78–98 (YLPF…FAVF), 107–127 (SLST…FYGI), 174–194 (MILA…MGVL), and 196–216 (LLIG…YIAA). Residues 224-251 (NAGASDDEGGEDAKSACAAGGKICKHKP) form a disordered region.

Belongs to the ATPase A chain family. In terms of assembly, F-type ATPases have 2 components, CF(1) - the catalytic core - and CF(0) - the membrane proton channel. CF(1) has five subunits: alpha(3), beta(3), gamma(1), delta(1), epsilon(1). CF(0) has three main subunits: a(1), b(2) and c(9-12). The alpha and beta chains form an alternating ring which encloses part of the gamma chain. CF(1) is attached to CF(0) by a central stalk formed by the gamma and epsilon chains, while a peripheral stalk is formed by the delta and b chains.

It localises to the cell inner membrane. In terms of biological role, key component of the proton channel; it plays a direct role in the translocation of protons across the membrane. This chain is ATP synthase subunit a, found in Nitrosospira multiformis (strain ATCC 25196 / NCIMB 11849 / C 71).